A 451-amino-acid chain; its full sequence is tRNA modification GTPase MnmE (451 aa).

Residues arginine 25, glutamate 87, and arginine 127 each coordinate (6S)-5-formyl-5,6,7,8-tetrahydrofolate. Residues 222–374 form the TrmE-type G domain; that stretch reads GLRVALVGRP…FVQVLLERCG (153 aa). Asparagine 232 contributes to the K(+) binding site. GTP contacts are provided by residues 232–237, 251–257, and 276–279; these read NVGKSS, TELPGTT, and DTAG. Serine 236 lines the Mg(2+) pocket. Threonine 251, leucine 253, and threonine 256 together coordinate K(+). Threonine 257 lines the Mg(2+) pocket. Lysine 451 lines the (6S)-5-formyl-5,6,7,8-tetrahydrofolate pocket.

This sequence belongs to the TRAFAC class TrmE-Era-EngA-EngB-Septin-like GTPase superfamily. TrmE GTPase family. In terms of assembly, homodimer. Heterotetramer of two MnmE and two MnmG subunits. Requires K(+) as cofactor.

The protein resides in the cytoplasm. Exhibits a very high intrinsic GTPase hydrolysis rate. Involved in the addition of a carboxymethylaminomethyl (cmnm) group at the wobble position (U34) of certain tRNAs, forming tRNA-cmnm(5)s(2)U34. In Synechococcus sp. (strain CC9902), this protein is tRNA modification GTPase MnmE.